A 594-amino-acid chain; its full sequence is Beta-mannosyltransferase 3 (594 aa).

Residues 1–6 (MRIRSN) lie on the Cytoplasmic side of the membrane. Residues 7–27 (VLLLSTAGALALVWFAVVFSW) form a helical membrane-spanning segment. Topologically, residues 28–594 (DDKSIFGIPT…KDEVKDTKAK (567 aa)) are extracellular. A glycan (N-linked (GlcNAc...) asparagine) is linked at N305. Positions 512–594 (VTRGEEDRLK…KDEVKDTKAK (83 aa)) form a coiled coil. Residues 517-558 (EDRLKNKEKERKIEEKRKKEEERKKKEEEKKKKEEEEKKKKE) show a composition bias toward basic and acidic residues. Positions 517 to 564 (EDRLKNKEKERKIEEKRKKEEERKKKEEEKKKKEEEEKKKKEEEEEEE) are disordered.

Belongs to the BMT family.

It is found in the membrane. Functionally, beta-mannosyltransferase involved in cell wall biosynthesis. The protein is Beta-mannosyltransferase 3 (BMT3) of Komagataella phaffii (strain ATCC 76273 / CBS 7435 / CECT 11047 / NRRL Y-11430 / Wegner 21-1) (Yeast).